A 239-amino-acid polypeptide reads, in one-letter code: Putative GEM-like protein 3 (239 aa).

The tract at residues 29–68 (HWNPELVSESPAPDEKALSSSSAARSNPYVARAPTETSDA) is disordered. One can recognise a GRAM domain in the interval 128 to 191 (KIFRQTFETV…HQLKSVNPSI (64 aa)).

Belongs to the GEM family.

The sequence is that of Putative GEM-like protein 3 from Arabidopsis thaliana (Mouse-ear cress).